The primary structure comprises 598 residues: Elongation factor 4 (598 aa).

In terms of domain architecture, tr-type G spans 2 to 184 (KNIRNFSIIA…EIVHKIPAPE (183 aa)). GTP-binding positions include 14–19 (DHGKST) and 131–134 (NKID).

Belongs to the TRAFAC class translation factor GTPase superfamily. Classic translation factor GTPase family. LepA subfamily.

The protein resides in the cell inner membrane. The catalysed reaction is GTP + H2O = GDP + phosphate + H(+). In terms of biological role, required for accurate and efficient protein synthesis under certain stress conditions. May act as a fidelity factor of the translation reaction, by catalyzing a one-codon backward translocation of tRNAs on improperly translocated ribosomes. Back-translocation proceeds from a post-translocation (POST) complex to a pre-translocation (PRE) complex, thus giving elongation factor G a second chance to translocate the tRNAs correctly. Binds to ribosomes in a GTP-dependent manner. In Pasteurella multocida (strain Pm70), this protein is Elongation factor 4.